A 328-amino-acid chain; its full sequence is Malate dehydrogenase (328 aa).

12–18 (GAAGQIG) contributes to the NAD(+) binding site. Arg93 and Arg99 together coordinate substrate. NAD(+)-binding positions include Asn106, Gln113, and 130–132 (VGN). The substrate site is built by Asn132 and Arg163. His188 acts as the Proton acceptor in catalysis.

It belongs to the LDH/MDH superfamily. MDH type 2 family.

It carries out the reaction (S)-malate + NAD(+) = oxaloacetate + NADH + H(+). Catalyzes the reversible oxidation of malate to oxaloacetate. In Saccharopolyspora erythraea (strain ATCC 11635 / DSM 40517 / JCM 4748 / NBRC 13426 / NCIMB 8594 / NRRL 2338), this protein is Malate dehydrogenase.